The following is a 334-amino-acid chain: Ethanol acetyltransferase 1 (334 aa).

The transit peptide at 1–16 directs the protein to the mitochondrion; that stretch reads MFASNVVVLNKRSIRF. Residues serine 124, aspartate 148, and histidine 296 each act as charge relay system in the active site.

Belongs to the AB hydrolase superfamily.

It is found in the mitochondrion. The catalysed reaction is ethanol + acetyl-CoA = ethyl acetate + CoA. It catalyses the reaction acetyl-CoA + H2O = acetate + CoA + H(+). It carries out the reaction ethyl acetate + H2O = ethanol + acetate + H(+). Functionally, alcohol acetyltransferase that catalyzes the synthesis of ethyl acetate from ethanol and acetyl-CoA. Can also function as a thioesterase by hydrolyzing acetyl-CoA in the absence of ethanol, as well as esterase hydrolyzing ethyl acetate. This is Ethanol acetyltransferase 1 (EAT1) from Hanseniaspora uvarum (Yeast).